Here is a 68-residue protein sequence, read N- to C-terminus: Conotoxin Lp5.2 (68 aa).

An N-terminal signal peptide occupies residues 1–19 (MRCVPVFIILLLLASPAAP). The propeptide occupies 20–54 (KSLETRIQNDLIRAGLTDADLKTEKGFLSGLLNVA).

It belongs to the conotoxin T superfamily. Post-translationally, contains 2 disulfide bonds that can be either 'C1-C3, C2-C4' or 'C1-C4, C2-C3', since these disulfide connectivities have been observed for conotoxins with cysteine framework V (for examples, see AC P0DQQ7 and AC P81755). As to expression, expressed by the venom duct.

Its subcellular location is the secreted. This Conus leopardus (Leopard cone) protein is Conotoxin Lp5.2.